Here is a 156-residue protein sequence, read N- to C-terminus: Small ribosomal subunit protein uS7 (156 aa).

Belongs to the universal ribosomal protein uS7 family. Part of the 30S ribosomal subunit. Contacts proteins S9 and S11.

Functionally, one of the primary rRNA binding proteins, it binds directly to 16S rRNA where it nucleates assembly of the head domain of the 30S subunit. Is located at the subunit interface close to the decoding center, probably blocks exit of the E-site tRNA. This is Small ribosomal subunit protein uS7 from Clostridium beijerinckii (strain ATCC 51743 / NCIMB 8052) (Clostridium acetobutylicum).